A 344-amino-acid polypeptide reads, in one-letter code: MFKSLAAVLPRASKAKFLQKNYASTLAFIESSKDGSVSRSSLSLLAAAQKLSNPITAVITGSKAEKTAEALKSSYSCSNLEKLVIFEDSKLDTCLPEQLTPLLVKLLKGGDYSHFVVSNSSVGKSVLPRVGALLDVQPVCEVTVIKDPKTFIRPIYAGNIISTIECQAEKKLLIIRASAFPPIAEGSMDSVTIEKRTDIPPCDLNVTWVKTILTKSERPELTSAQNVVTGGRALKDKETFEKLLSPLADVLHAAIGATRASVDNGLCDNSLQIGQTGKVVAPNLYIAIGVSGAVQHLAGMKDSKVIVAINNDPDAPIFNVADYGLQGDLYKIVPELTEKLGKYK.

An FAD-binding site is contributed by 284–312 (LYIAIGVSGAVQHLAGMKDSKVIVAINND).

This sequence belongs to the ETF alpha-subunit/FixB family. As to quaternary structure, heterodimer of an alpha and a beta subunit. FAD is required as a cofactor.

It localises to the mitochondrion matrix. In terms of biological role, the electron transfer flavoprotein serves as a specific electron acceptor for several dehydrogenases, including five acyl-CoA dehydrogenases, glutaryl-CoA and sarcosine dehydrogenase. It transfers the electrons to the main mitochondrial respiratory chain via ETF-ubiquinone oxidoreductase (ETF dehydrogenase). The chain is Probable electron transfer flavoprotein subunit alpha, mitochondrial (AIM45) from Saccharomyces cerevisiae (strain ATCC 204508 / S288c) (Baker's yeast).